A 429-amino-acid chain; its full sequence is MKERTIQPVNNGLNGNITIPGDKSISHRAVMFGAIAEGKTTIKGFLPGADCLSTISCFKEMGVDIVQNGDEVTVVGKGLEGLQEPKAVLDVGNSGTTIRLMSGILANTPFFSCVQGDASIAKRPMKRVTNPLKQMGANIDGREEGTFTPLTIRGGDLKAIEYTSPVASAQVKSAILLAGLRAEGVTAVTEPHISRDHTERMLEAFGVKVTREGKTVKLAGGQKLTATDVQVPGDVSSAAFFLVAGAIIPNSKLVLQNVGMNPTRTGIIDVLEKMGATFTVEPINEGASEPAANITIETSSLKGIEIGGDIIPRLIDEIPVIALAATQAEGITVIKDAHELKVKETNRIDTVVAELTKLGARIEATDDGMIIYGKSALKGNTVNSYGDHRIGMMLAIAGCIAKGKTTIEDAEAVGVSYPTFFEELQKLAK.

3-phosphoshikimate-binding residues include Lys23, Ser24, and Arg28. Residue Lys23 coordinates phosphoenolpyruvate. Residues Gly95 and Arg123 each contribute to the phosphoenolpyruvate site. The 3-phosphoshikimate site is built by Ser168, Gln170, Asp316, and Lys343. Residue Gln170 participates in phosphoenolpyruvate binding. The active-site Proton acceptor is Asp316. Positions 347 and 389 each coordinate phosphoenolpyruvate.

The protein belongs to the EPSP synthase family. Monomer.

The protein localises to the cytoplasm. The catalysed reaction is 3-phosphoshikimate + phosphoenolpyruvate = 5-O-(1-carboxyvinyl)-3-phosphoshikimate + phosphate. Its pathway is metabolic intermediate biosynthesis; chorismate biosynthesis; chorismate from D-erythrose 4-phosphate and phosphoenolpyruvate: step 6/7. Its function is as follows. Catalyzes the transfer of the enolpyruvyl moiety of phosphoenolpyruvate (PEP) to the 5-hydroxyl of shikimate-3-phosphate (S3P) to produce enolpyruvyl shikimate-3-phosphate and inorganic phosphate. This Bacillus cereus (strain ATCC 10987 / NRS 248) protein is 3-phosphoshikimate 1-carboxyvinyltransferase.